A 112-amino-acid chain; its full sequence is Ig kappa chain V-III region TEPC 124 (112 aa).

The framework-1 stretch occupies residues 1-23 (DIVLTQSPASLAVSLGQRATISC). Cysteine 23 and cysteine 92 are disulfide-bonded. Residues 24–38 (RASZSVNWYGNSFMZ) are complementarity-determining-1. A framework-2 region spans residues 39-53 (WYZZKPGZPPKLLIY). A complementarity-determining-2 region spans residues 54–60 (RASNLZS). The tract at residues 61–92 (GIPARFSGSGSRTBFTLTIBPVZABDVATYFC) is framework-3. A complementarity-determining-3 region spans residues 93–101 (ZZSBZAPWT). Residues 102-111 (FGSGTKLEIK) are framework-4.

The polypeptide is Ig kappa chain V-III region TEPC 124 (Mus musculus (Mouse)).